Here is a 367-residue protein sequence, read N- to C-terminus: NADH-quinone oxidoreductase subunit H (367 aa).

A run of 8 helical transmembrane segments spans residues 19–39 (ALFI…AYLV), 87–107 (ICFL…WAVI), 132–152 (IGVL…IIAG), 178–198 (IGLT…GEIV), 204–224 (MPYW…ISAL), 266–286 (ILIN…PLNI), 291–311 (IIPG…CFIW), and 328–348 (GWKV…SILV).

Belongs to the complex I subunit 1 family. NDH-1 is composed of 14 different subunits. Subunits NuoA, H, J, K, L, M, N constitute the membrane sector of the complex.

Its subcellular location is the cell inner membrane. The catalysed reaction is a quinone + NADH + 5 H(+)(in) = a quinol + NAD(+) + 4 H(+)(out). NDH-1 shuttles electrons from NADH, via FMN and iron-sulfur (Fe-S) centers, to quinones in the respiratory chain. The immediate electron acceptor for the enzyme in this species is believed to be ubiquinone. Couples the redox reaction to proton translocation (for every two electrons transferred, four hydrogen ions are translocated across the cytoplasmic membrane), and thus conserves the redox energy in a proton gradient. This subunit may bind ubiquinone. The polypeptide is NADH-quinone oxidoreductase subunit H (Ehrlichia chaffeensis (strain ATCC CRL-10679 / Arkansas)).